The primary structure comprises 284 residues: Tropomyosin-2 (284 aa).

The stretch at 1-284 (MDAIKKKMQA…DQTFAELTGY (284 aa)) forms a coiled coil. A disordered region spans residues 82–110 (ESEVATQNRKVQQIEEDLEKSEERSTTAQ).

This sequence belongs to the tropomyosin family. Homodimer.

Functionally, tropomyosin, in association with the troponin complex, plays a central role in the calcium dependent regulation of muscle contraction. May also regulate motor systems required to maintain nuclear integrity and apico-basal polarity during embryogenesis. The polypeptide is Tropomyosin-2 (Tm2) (Drosophila melanogaster (Fruit fly)).